Consider the following 160-residue polypeptide: E3 ubiquitin ligase complex SCF subunit sconC (160 aa).

The interaction with the F-box domain of F-box proteins stretch occupies residues 101–160 (ILAANYLDIKALLDVGCKTVANMIKGKSPEEIRKTFNIQNDFTPEEEDQIRRENEWAEDR).

The protein belongs to the SKP1 family. In terms of assembly, component of the SCF (SKP1-CUL1-F-box protein) E3 ubiquitin ligase complexes.

It participates in protein modification; protein ubiquitination. Essential component of the SCF (SKP1-CUL1-F-box protein) E3 ubiquitin ligase complexes, which mediate the ubiquitination and subsequent proteasomal degradation of target proteins. Controls sulfur metabolite repression, probably by mediating the inactivation or degradation of the metR transcription factor. The protein is E3 ubiquitin ligase complex SCF subunit sconC (sconC) of Talaromyces marneffei (strain ATCC 18224 / CBS 334.59 / QM 7333) (Penicillium marneffei).